The primary structure comprises 406 residues: Argininosuccinate synthase (406 aa).

ATP-binding positions include 11–19 and alanine 38; that span reads AYSGGLDTS. 2 residues coordinate L-citrulline: tyrosine 91 and serine 96. Glycine 121 provides a ligand contact to ATP. Positions 123, 127, and 128 each coordinate L-aspartate. Asparagine 127 is a binding site for L-citrulline. L-citrulline contacts are provided by arginine 131, serine 182, serine 191, glutamate 267, and tyrosine 279.

It belongs to the argininosuccinate synthase family. Type 1 subfamily. In terms of assembly, homotetramer.

The protein localises to the cytoplasm. It catalyses the reaction L-citrulline + L-aspartate + ATP = 2-(N(omega)-L-arginino)succinate + AMP + diphosphate + H(+). It functions in the pathway amino-acid biosynthesis; L-arginine biosynthesis; L-arginine from L-ornithine and carbamoyl phosphate: step 2/3. In Rhodospirillum centenum (strain ATCC 51521 / SW), this protein is Argininosuccinate synthase.